Reading from the N-terminus, the 253-residue chain is uncharacterized protein (253 aa).

10-35 (ISGAASKRGIGRATAELFASHGARVA) serves as a coordination point for NADP(+). Substrate is bound at residue Ser-144. Catalysis depends on Tyr-159, which acts as the Proton acceptor.

It belongs to the short-chain dehydrogenases/reductases (SDR) family.

This is an uncharacterized protein from Sinorhizobium fredii (strain NBRC 101917 / NGR234).